Consider the following 98-residue polypeptide: Putative septation protein SpoVG (98 aa).

This sequence belongs to the SpoVG family.

Functionally, could be involved in septation. The sequence is that of Putative septation protein SpoVG from Alkaliphilus metalliredigens (strain QYMF).